We begin with the raw amino-acid sequence, 859 residues long: Photoactivated adenylate cyclase subunit beta-like protein FB (859 aa).

The region spanning 56-149 (LRRLMYLSKS…GRMYGDWHMK (94 aa)) is the BLUF 1 domain. Residues 205–333 (VVTFIYLVEF…DCINTTSRIA (129 aa)) enclose the Guanylate cyclase 1 domain. Residues 414–449 (GLPNSQRPPIFDDTPKANRRPRTPGYGGRQRSDSQV) form a disordered region. Positions 471-563 (LTTLTYISQA…RVYPSEWTLT (93 aa)) constitute a BLUF 2 domain. Positions 619-748 (VMLATDICSF…AVSARVMEVE (130 aa)) constitute a Guanylate cyclase 2 domain. Residues 813–859 (AARSGEKPLTEPEAAKPDFRVSPGRVRHGDSGRRSNSAQGKRSIQVR) form a disordered region. Over residues 815-831 (RSGEKPLTEPEAAKPDF) the composition is skewed to basic and acidic residues. Residues 846–859 (RSNSAQGKRSIQVR) are compositionally biased toward polar residues.

It belongs to the adenylyl cyclase class-4/guanylyl cyclase family. As to quaternary structure, heterotetramer of two alpha and two beta subunits.

It localises to the cell projection. It is found in the cilium. The protein resides in the flagellum. The chain is Photoactivated adenylate cyclase subunit beta-like protein FB from Euglena gracilis.